A 360-amino-acid polypeptide reads, in one-letter code: Decorin (360 aa).

Positions 1 to 16 are cleaved as a signal peptide; sequence MKATIIFLLLAQVSWA. A propeptide spanning residues 17–30 is cleaved from the precursor; sequence GPFQQRGLFDFMLE. S34 carries an O-linked (Xyl...) (glycosaminoglycan) serine glycan. Intrachain disulfides connect C55–C61 and C59–C68. LRR repeat units follow at residues 74–94, 95–118, 119–142, 143–163, 164–187, 188–213, 214–234, 235–258, 259–282, 283–305, 306–335, and 336–360; these read DKVP…NNKI, TEIK…NNKI, SKIS…KNHL, KELP…ENEI, TKVR…TNPL, KSSG…DTNI, TTIP…GNKI, TKVD…FNSI, SAVD…NNKL, IRVP…NNNI, SAVG…SNPV, and QYWE…GNYK. The N-linked (GlcNAc...) asparagine glycan is linked to N212. Residues N263 and N304 are each glycosylated (N-linked (GlcNAc...) asparagine). Cysteines 314 and 347 form a disulfide.

This sequence belongs to the small leucine-rich proteoglycan (SLRP) family. SLRP class I subfamily. Binds to type I and type II collagen, fibronectin and TGF-beta. Forms a ternary complex with MFAP2 and ELN. Interacts with DPT. The attached glycosaminoglycan chain can be either chondroitin sulfate or dermatan sulfate depending upon the tissue of origin.

It localises to the secreted. The protein localises to the extracellular space. It is found in the extracellular matrix. In terms of biological role, may affect the rate of fibrils formation. The chain is Decorin (DCN) from Canis lupus familiaris (Dog).